A 149-amino-acid chain; its full sequence is Large ribosomal subunit protein bL9 (149 aa).

N6-acetyllysine is present on K89.

Belongs to the bacterial ribosomal protein bL9 family.

Its function is as follows. Binds to the 23S rRNA. The protein is Large ribosomal subunit protein bL9 of Shigella dysenteriae serotype 1 (strain Sd197).